Here is a 293-residue protein sequence, read N- to C-terminus: Probable metal transport system membrane protein CPn_0543/CP_0209/CPj0543/CpB0565 (293 aa).

7 helical membrane passes run 12–32 (LLIL…GGVM), 41–61 (IVSI…LTLW), 68–88 (LSFF…LCIG), 101–121 (LIAM…SRLP), 140–160 (PSDL…VVLC), 183–203 (LWYF…IYVM), and 253–273 (FPVG…SLCV).

Belongs to the ABC-3 integral membrane protein family.

The protein localises to the cell inner membrane. Part of an ATP-driven transport system CPn_0541/CPn_0542/CPn_0543 for a metal. The protein is Probable metal transport system membrane protein CPn_0543/CP_0209/CPj0543/CpB0565 of Chlamydia pneumoniae (Chlamydophila pneumoniae).